The primary structure comprises 396 residues: Putative O-antigen transporter (396 aa).

A run of 11 helical transmembrane segments spans residues 5–25 (ILLL…VLPY), 32–52 (IETF…SLIV), 82–102 (IVKL…LMYV), 107–127 (LIYP…FATW), 137–157 (AVVI…FILV), 163–183 (IVAA…ISIY), 211–231 (FFLS…LLSF), 286–306 (AIFG…LTTI), 322–342 (MFLL…MLIP), 348–368 (ILSR…FPLV), and 372–392 (GAWG…LFML).

Belongs to the polysaccharide synthase family.

It is found in the cell inner membrane. It participates in bacterial outer membrane biogenesis; LPS O-antigen biosynthesis. In terms of biological role, may be involved in the translocation process of the nascent O-polysaccharide molecules and/or its ligation to lipid A core units. This is Putative O-antigen transporter (rfbX) from Shigella dysenteriae.